The sequence spans 106 residues: Neisseria hypothetical transcription factor (106 aa).

One can recognise an HTH cro/C1-type domain in the interval 26–80; it reads MRLFRVNKGWSQEELARQCGLDRTYVSAVERKRWNIALSNIEKMAAALGVAAYQL. The H-T-H motif DNA-binding region spans 37 to 56; sequence QEELARQCGLDRTYVSAVER.

As to quaternary structure, homodimer. Can interact with the dimeric form of the DNA mimic protein DMP19 with 1:1 stoichiometry.

The protein localises to the cytoplasm. Its activity is regulated as follows. Repressor activity is inhibited in the presence of the DNA mimic protein DMP19, which interacts with NHTF and prevents binding of NHTF to its DNA-binding sites. Functionally, transcriptional regulator probably involved in the response to nitrogen levels. Down-regulates its own expression as well as the expression of the downstream gene, glnD, which encodes the [Protein-PII] uridylyltransferase, a key enzyme in the nitrogen regulation system. Acts by binding to a specific palindromic DNA sequence (5'-TGTNANTNACA-3') in its 5'-untranslated region. This chain is Neisseria hypothetical transcription factor, found in Neisseria meningitidis serogroup B (strain ATCC BAA-335 / MC58).